An 876-amino-acid polypeptide reads, in one-letter code: Alanine--tRNA ligase (876 aa).

His-564, His-568, Cys-666, and His-670 together coordinate Zn(2+).

This sequence belongs to the class-II aminoacyl-tRNA synthetase family. As to quaternary structure, homotetramer. Zn(2+) serves as cofactor.

The protein resides in the cytoplasm. The catalysed reaction is tRNA(Ala) + L-alanine + ATP = L-alanyl-tRNA(Ala) + AMP + diphosphate. Its function is as follows. Catalyzes the attachment of alanine to tRNA(Ala) in a two-step reaction: alanine is first activated by ATP to form Ala-AMP and then transferred to the acceptor end of tRNA(Ala). Also edits incorrectly charged Ser-tRNA(Ala) and Gly-tRNA(Ala) via its editing domain. In Salmonella choleraesuis (strain SC-B67), this protein is Alanine--tRNA ligase.